The following is a 136-amino-acid chain: Protein NrdI (136 aa).

It belongs to the NrdI family.

Functionally, probably involved in ribonucleotide reductase function. The polypeptide is Protein NrdI (Escherichia coli O7:K1 (strain IAI39 / ExPEC)).